A 360-amino-acid polypeptide reads, in one-letter code: Arginase, non-hepatic 3 (360 aa).

Mn(2+)-binding residues include His-122, Asp-145, His-147, and Asp-149. Residues His-147–Asn-151, Ser-158–Asn-160, and Asp-204 contribute to the substrate site. Asp-253 and Asp-255 together coordinate Mn(2+). Residues Thr-267 and Glu-298 each contribute to the substrate site.

This sequence belongs to the arginase family. As to quaternary structure, homotrimer. Mn(2+) is required as a cofactor. In terms of tissue distribution, expressed at differing tadpole stages in tail, intestine, hindlimb and trunk region. Strongest in tadpole tail.

The enzyme catalyses L-arginine + H2O = urea + L-ornithine. It functions in the pathway nitrogen metabolism; urea cycle; L-ornithine and urea from L-arginine: step 1/1. Its function is as follows. As well as its role in the urea cycle, may be involved in tissue remodeling. The protein is Arginase, non-hepatic 3 (arg2-c) of Xenopus laevis (African clawed frog).